Consider the following 159-residue polypeptide: Ribosome-binding factor A (159 aa).

Basic and acidic residues-rich tracts occupy residues 118-128 and 137-146; these read AADDEVAKARE and DPYKEPRVAS. The interval 118 to 159 is disordered; it reads AADDEVAKARENAQPAGDADPYKEPRVASDEDEASPDVREAD.

This sequence belongs to the RbfA family. In terms of assembly, monomer. Binds 30S ribosomal subunits, but not 50S ribosomal subunits or 70S ribosomes.

It is found in the cytoplasm. One of several proteins that assist in the late maturation steps of the functional core of the 30S ribosomal subunit. Associates with free 30S ribosomal subunits (but not with 30S subunits that are part of 70S ribosomes or polysomes). Required for efficient processing of 16S rRNA. May interact with the 5'-terminal helix region of 16S rRNA. This is Ribosome-binding factor A from Rhodococcus erythropolis (strain PR4 / NBRC 100887).